The primary structure comprises 366 residues: Chorismate synthase (366 aa).

R46 contributes to the NADP(+) binding site. FMN contacts are provided by residues 122–124, 243–244, G284, 299–303, and R325; these read RSS, NG, and KPTPS.

The protein belongs to the chorismate synthase family. Homotetramer. Requires FMNH2 as cofactor.

The enzyme catalyses 5-O-(1-carboxyvinyl)-3-phosphoshikimate = chorismate + phosphate. It participates in metabolic intermediate biosynthesis; chorismate biosynthesis; chorismate from D-erythrose 4-phosphate and phosphoenolpyruvate: step 7/7. Functionally, catalyzes the anti-1,4-elimination of the C-3 phosphate and the C-6 proR hydrogen from 5-enolpyruvylshikimate-3-phosphate (EPSP) to yield chorismate, which is the branch point compound that serves as the starting substrate for the three terminal pathways of aromatic amino acid biosynthesis. This reaction introduces a second double bond into the aromatic ring system. The polypeptide is Chorismate synthase (Campylobacter hominis (strain ATCC BAA-381 / DSM 21671 / CCUG 45161 / LMG 19568 / NCTC 13146 / CH001A)).